The sequence spans 530 residues: NADH-quinone oxidoreductase subunit C/D (530 aa).

The NADH dehydrogenase I subunit C stretch occupies residues 1–144; that stretch reads MQEIQFIVPA…NPLCMANEET (144 aa). The tract at residues 171–530 is NADH dehydrogenase I subunit D; it reads EYVVNIGPQH…LDYVVPDIDR (360 aa).

The protein in the N-terminal section; belongs to the complex I 30 kDa subunit family. In the C-terminal section; belongs to the complex I 49 kDa subunit family. In terms of assembly, NDH-1 is composed of 13 different subunits. Subunits NuoB, CD, E, F, and G constitute the peripheral sector of the complex.

The protein localises to the cell inner membrane. It carries out the reaction a quinone + NADH + 5 H(+)(in) = a quinol + NAD(+) + 4 H(+)(out). Functionally, NDH-1 shuttles electrons from NADH, via FMN and iron-sulfur (Fe-S) centers, to quinones in the respiratory chain. The immediate electron acceptor for the enzyme in this species is believed to be a menaquinone. Couples the redox reaction to proton translocation (for every two electrons transferred, four hydrogen ions are translocated across the cytoplasmic membrane), and thus conserves the redox energy in a proton gradient. In Bacteroides thetaiotaomicron (strain ATCC 29148 / DSM 2079 / JCM 5827 / CCUG 10774 / NCTC 10582 / VPI-5482 / E50), this protein is NADH-quinone oxidoreductase subunit C/D.